A 718-amino-acid chain; its full sequence is Cyclomaltodextrin glucanotransferase (718 aa).

The N-terminal stretch at 1–34 (MFQMAKRAFLSTTLTLGLLAGSALPFLPASAAYA) is a signal peptide. Residues 35 to 172 (DPDIAVTNKQ…GIKIIIDFAP (138 aa)) form an A1 region. Residues aspartate 61, asparagine 63, asparagine 66, and asparagine 67 each contribute to the Ca(2+) site. Residues cysteine 77 and cysteine 84 are joined by a disulfide bond. Residues glycine 85 and aspartate 87 each coordinate Ca(2+). 134–135 (YW) is a binding site for substrate. A Ca(2+)-binding site is contributed by asparagine 173. The segment at 173-236 (NHTSPAMETD…NLYDLADFNH (64 aa)) is b. Histidine 174 contributes to the substrate binding site. Residue isoleucine 224 coordinates Ca(2+). Substrate is bound at residue 227–230 (NLYD). Residue aspartate 233 participates in Ca(2+) binding. The tract at residues 237-440 (NNATIDKYFK…LRKSNPAIAY (204 aa)) is A2. Residue arginine 261 coordinates substrate. Aspartate 263 functions as the Nucleophile in the catalytic mechanism. Residue 266 to 267 (KH) coordinates substrate. Histidine 267 is a Ca(2+) binding site. Glutamate 291 functions as the Proton donor in the catalytic mechanism. Substrate contacts are provided by histidine 361, aspartate 405, and arginine 409. The c stretch occupies residues 441 to 528 (GSTQQRWINN…ATAVWQYTAA (88 aa)). The tract at residues 529–614 (ETTPTIGHVG…SNAYNHFTIL (86 aa)) is d. The IPT/TIG domain maps to 532–612 (PTIGHVGPVM…VNSNAYNHFT (81 aa)). Positions 613–718 (ILTGDQVTVR…GTATVTVNWQ (106 aa)) constitute a CBM20 domain. The interval 615–718 (TGDQVTVRFV…GTATVTVNWQ (104 aa)) is e.

This sequence belongs to the glycosyl hydrolase 13 family. In terms of assembly, monomer. Ca(2+) is required as a cofactor.

The protein localises to the secreted. It carries out the reaction Cyclizes part of a (1-&gt;4)-alpha-D-glucan chain by formation of a (1-&gt;4)-alpha-D-glucosidic bond.. The chain is Cyclomaltodextrin glucanotransferase (cgt) from Bacillus sp. (strain 6.6.3).